The primary structure comprises 39 residues: Cecropin (39 aa).

It localises to the secreted. Its function is as follows. Antibacterial peptide active against Gram-negative bacterium E.coli. Has no activity against Gram-positive bacterium M.luteus. Weakly active against M.luteus. This is Cecropin from Calliphora vicina (Blue blowfly).